Reading from the N-terminus, the 262-residue chain is 3-deoxy-manno-octulosonate cytidylyltransferase (262 aa).

This sequence belongs to the KdsB family.

The protein localises to the cytoplasm. The enzyme catalyses 3-deoxy-alpha-D-manno-oct-2-ulosonate + CTP = CMP-3-deoxy-beta-D-manno-octulosonate + diphosphate. It participates in nucleotide-sugar biosynthesis; CMP-3-deoxy-D-manno-octulosonate biosynthesis; CMP-3-deoxy-D-manno-octulosonate from 3-deoxy-D-manno-octulosonate and CTP: step 1/1. The protein operates within bacterial outer membrane biogenesis; lipopolysaccharide biosynthesis. Functionally, activates KDO (a required 8-carbon sugar) for incorporation into bacterial lipopolysaccharide in Gram-negative bacteria. This is 3-deoxy-manno-octulosonate cytidylyltransferase from Koribacter versatilis (strain Ellin345).